A 514-amino-acid polypeptide reads, in one-letter code: Tryptophan decarboxylase 1 (514 aa).

Phe-104 contacts serotonin. Positions 175 and 176 each coordinate pyridoxal 5'-phosphate. His-214 serves as a coordination point for serotonin. Thr-273 is a pyridoxal 5'-phosphate binding site. Position 330 is an N6-(pyridoxal phosphate)lysine (Lys-330). Tyr-359 functions as the Proton donor in the catalytic mechanism. Residues Val-380 and Gly-381 each contribute to the pyridoxal 5'-phosphate site.

The protein belongs to the group II decarboxylase family. Forms homodimers. Requires pyridoxal 5'-phosphate as cofactor.

The enzyme catalyses L-tryptophan + H(+) = tryptamine + CO2. It carries out the reaction 5-hydroxy-L-tryptophan + H(+) = serotonin + CO2. Its function is as follows. Involved in serotonin biosynthesis. Catalyzes the decarboxylation of L-tryptophan to produce tryptamine, which is converted to serotonin by tryptamine 5-hydroxylase. May play a major role in serotonin biosynthesis during senescence. Accumulation of serotonin attenuates leaf senescence. Catalyzes the decarboxylation of 5-hydroxy-L-tryptophan to produce serotonin. The chain is Tryptophan decarboxylase 1 from Oryza sativa subsp. japonica (Rice).